Consider the following 72-residue polypeptide: Inner membrane protein YmgF (72 aa).

The Cytoplasmic segment spans residues 1–9 (MNNSNNLDY). The helical transmembrane segment at 10-30 (FTLYIIFSIAFMLITLLVILI) threads the bilayer. Residues 31–34 (AKPS) are Periplasmic-facing. Residues 35-55 (TGLGEVLVTINLLNALVWLAI) form a helical membrane-spanning segment. The Cytoplasmic segment spans residues 56 to 72 (NLVNRLRERLVNHRDQQ).

In terms of assembly, interacts with FtsL, FtsQ, FtsI, FtsN, and probably many other cell division proteins.

Its subcellular location is the cell inner membrane. In terms of biological role, could be involved in cell division. May participate in the stabilization of the cell divisome under specific conditions. The sequence is that of Inner membrane protein YmgF (ymgF) from Escherichia coli (strain K12).